The chain runs to 117 residues: Large ribosomal subunit protein bL20c (117 aa).

The protein belongs to the bacterial ribosomal protein bL20 family.

The protein localises to the plastid. The protein resides in the chloroplast. In terms of biological role, binds directly to 23S ribosomal RNA and is necessary for the in vitro assembly process of the 50S ribosomal subunit. It is not involved in the protein synthesizing functions of that subunit. This chain is Large ribosomal subunit protein bL20c, found in Manihot esculenta (Cassava).